A 320-amino-acid polypeptide reads, in one-letter code: Acetyl-coenzyme A carboxylase carboxyl transferase subunit alpha (320 aa).

The 254-residue stretch at 42–295 (IEDKAKAALH…GDAIAQAFSD (254 aa)) folds into the CoA carboxyltransferase C-terminal domain.

This sequence belongs to the AccA family. Acetyl-CoA carboxylase is a heterohexamer composed of biotin carboxyl carrier protein (AccB), biotin carboxylase (AccC) and two subunits each of ACCase subunit alpha (AccA) and ACCase subunit beta (AccD).

The protein resides in the cytoplasm. The catalysed reaction is N(6)-carboxybiotinyl-L-lysyl-[protein] + acetyl-CoA = N(6)-biotinyl-L-lysyl-[protein] + malonyl-CoA. The protein operates within lipid metabolism; malonyl-CoA biosynthesis; malonyl-CoA from acetyl-CoA: step 1/1. Its function is as follows. Component of the acetyl coenzyme A carboxylase (ACC) complex. First, biotin carboxylase catalyzes the carboxylation of biotin on its carrier protein (BCCP) and then the CO(2) group is transferred by the carboxyltransferase to acetyl-CoA to form malonyl-CoA. The sequence is that of Acetyl-coenzyme A carboxylase carboxyl transferase subunit alpha from Afipia carboxidovorans (strain ATCC 49405 / DSM 1227 / KCTC 32145 / OM5) (Oligotropha carboxidovorans).